A 763-amino-acid polypeptide reads, in one-letter code: Phosphoglycerol transferase I (763 aa).

Transmembrane regions (helical) follow at residues 4–19, 26–48, 76–98, and 105–127; these read LLSF…IYAW, WWFA…LFAS, YILP…GWIL, and PHHF…ASPA.

The protein belongs to the OpgB family.

It is found in the cell inner membrane. It carries out the reaction a phosphatidylglycerol + a membrane-derived-oligosaccharide D-glucose = a 1,2-diacyl-sn-glycerol + a membrane-derived-oligosaccharide 6-(glycerophospho)-D-glucose.. Its pathway is glycan metabolism; osmoregulated periplasmic glucan (OPG) biosynthesis. Functionally, transfers a phosphoglycerol residue from phosphatidylglycerol to the membrane-bound nascent glucan backbones. The chain is Phosphoglycerol transferase I from Escherichia coli O6:H1 (strain CFT073 / ATCC 700928 / UPEC).